The sequence spans 475 residues: Protein nucleotidyltransferase YdiU (475 aa).

8 residues coordinate ATP: Gly82, Gly84, Arg85, Lys105, Asp117, Gly118, Arg168, and Arg175. Asp240 acts as the Proton acceptor in catalysis. Residues Asn241 and Asp250 each contribute to the Mg(2+) site. Asp250 is a binding site for ATP.

It belongs to the SELO family. Requires Mg(2+) as cofactor. Mn(2+) serves as cofactor.

The catalysed reaction is L-seryl-[protein] + ATP = 3-O-(5'-adenylyl)-L-seryl-[protein] + diphosphate. The enzyme catalyses L-threonyl-[protein] + ATP = 3-O-(5'-adenylyl)-L-threonyl-[protein] + diphosphate. It catalyses the reaction L-tyrosyl-[protein] + ATP = O-(5'-adenylyl)-L-tyrosyl-[protein] + diphosphate. It carries out the reaction L-histidyl-[protein] + UTP = N(tele)-(5'-uridylyl)-L-histidyl-[protein] + diphosphate. The catalysed reaction is L-seryl-[protein] + UTP = O-(5'-uridylyl)-L-seryl-[protein] + diphosphate. The enzyme catalyses L-tyrosyl-[protein] + UTP = O-(5'-uridylyl)-L-tyrosyl-[protein] + diphosphate. Functionally, nucleotidyltransferase involved in the post-translational modification of proteins. It can catalyze the addition of adenosine monophosphate (AMP) or uridine monophosphate (UMP) to a protein, resulting in modifications known as AMPylation and UMPylation. The sequence is that of Protein nucleotidyltransferase YdiU from Aeromonas hydrophila subsp. hydrophila (strain ATCC 7966 / DSM 30187 / BCRC 13018 / CCUG 14551 / JCM 1027 / KCTC 2358 / NCIMB 9240 / NCTC 8049).